The sequence spans 459 residues: Cysteine--tRNA ligase (459 aa).

Cys28 is a Zn(2+) binding site. Residues 30-40 carry the 'HIGH' region motif; the sequence is VTVYDLCHIGH. Zn(2+) contacts are provided by Cys209, His234, and Glu238. Residues 266 to 270 carry the 'KMSKS' region motif; that stretch reads KMSKS. Lys269 is a binding site for ATP.

This sequence belongs to the class-I aminoacyl-tRNA synthetase family. In terms of assembly, monomer. Requires Zn(2+) as cofactor.

The protein localises to the cytoplasm. It catalyses the reaction tRNA(Cys) + L-cysteine + ATP = L-cysteinyl-tRNA(Cys) + AMP + diphosphate. This is Cysteine--tRNA ligase from Haemophilus influenzae (strain PittGG).